The chain runs to 297 residues: Acetaldehyde dehydrogenase (297 aa).

Position 18-21 (18-21 (TGNI)) interacts with NAD(+). Cysteine 133 serves as the catalytic Acyl-thioester intermediate. Residues 165–173 (SAGPATRLN) and asparagine 275 each bind NAD(+).

The protein belongs to the acetaldehyde dehydrogenase family.

It carries out the reaction acetaldehyde + NAD(+) + CoA = acetyl-CoA + NADH + H(+). This is Acetaldehyde dehydrogenase from Spirochaeta aurantia.